We begin with the raw amino-acid sequence, 64 residues long: MVFLKKSLLLVLFVGLVSLSICEENKREEHEEIEENKEKAEEKRGWMSKIASGIGTFLSGMQQG.

Residues 1 to 22 (MVFLKKSLLLVLFVGLVSLSIC) form the signal peptide. A propeptide spanning residues 23–42 (EENKREEHEEIEENKEKAEE) is cleaved from the precursor. Gln63 is modified (glutamine amide).

Expressed by the skin glands.

It is found in the secreted. In terms of biological role, antimicrobial peptide against the wall-less bacteria A.laidlawii and S.melliferum, the Gram-positive bacteria B.megaterium KM, C.glutamicum ATCC 27853 and M.luteus ATCC 27853 and the Gram-negative-bacteria R.meliloti 102F34 and E.coli K12. The sequence is that of Phylloxin-B1 from Phyllomedusa bicolor (Two-colored leaf frog).